Here is a 292-residue protein sequence, read N- to C-terminus: Expansin-B11 (292 aa).

The first 27 residues, 1 to 27, serve as a signal peptide directing secretion; that stretch reads MAKSCTLVLLLVALVGLSLLVSPIACS. Residue Asn-51 is glycosylated (N-linked (GlcNAc...) asparagine). The Expansin-like EG45 domain occupies 82 to 192; the sequence is GGACGYQTAV…RRVPCKYSGV (111 aa). Disulfide bonds link Cys-85-Cys-114, Cys-117-Cys-187, and Cys-122-Cys-128. An Expansin-like CBD domain is found at 205 to 287; the sequence is FYFEVLIEFE…SWKPGVTYRS (83 aa).

It belongs to the expansin family. Expansin B subfamily. In terms of tissue distribution, expressed in internodes.

Its subcellular location is the secreted. It is found in the cell wall. The protein localises to the membrane. May cause loosening and extension of plant cell walls by disrupting non-covalent bonding between cellulose microfibrils and matrix glucans. No enzymatic activity has been found. May be required for rapid internodal elongation in deepwater rice during submergence. The chain is Expansin-B11 (EXPB11) from Oryza sativa subsp. japonica (Rice).